The chain runs to 693 residues: tRNA (guanine(37)-N(1))-methyltransferase (693 aa).

Residues Arg327, 365-366 (DI), and 392-393 (DA) each bind S-adenosyl-L-methionine. The tract at residues 497-572 (AGDSHQSNSH…QKAEDAPTNE (76 aa)) is disordered. A compositionally biased stretch (low complexity) spans 500 to 512 (SHQSNSHQSNPHE). Residue Asn591 participates in S-adenosyl-L-methionine binding.

This sequence belongs to the class I-like SAM-binding methyltransferase superfamily. TRM5/TYW2 family. In terms of assembly, monomer.

The protein resides in the mitochondrion matrix. It is found in the nucleus. The protein localises to the cytoplasm. The enzyme catalyses guanosine(37) in tRNA + S-adenosyl-L-methionine = N(1)-methylguanosine(37) in tRNA + S-adenosyl-L-homocysteine + H(+). Specifically methylates the N1 position of guanosine-37 in various cytoplasmic and mitochondrial tRNAs. Methylation is not dependent on the nature of the nucleoside 5' of the target nucleoside. This is the first step in the biosynthesis of wybutosine (yW), a modified base adjacent to the anticodon of tRNAs and required for accurate decoding. The sequence is that of tRNA (guanine(37)-N(1))-methyltransferase from Plasmodium vivax (strain Salvador I).